Consider the following 457-residue polypeptide: NADP-specific glutamate dehydrogenase (457 aa).

K111 is a catalytic residue.

It belongs to the Glu/Leu/Phe/Val dehydrogenases family. In terms of assembly, homohexamer.

The catalysed reaction is L-glutamate + NADP(+) + H2O = 2-oxoglutarate + NH4(+) + NADPH + H(+). In Agaricus bisporus (White button mushroom), this protein is NADP-specific glutamate dehydrogenase (gdhA).